A 326-amino-acid chain; its full sequence is Virulence factor CaO19.6688 (326 aa).

5 disordered regions span residues 19–91 (FNSL…KLPS), 112–137 (EEDNQEQQLQDGEPLSAPTTNNGTTK), 161–184 (NTTITSSRSNPTNSTPTSNDPSFP), 222–245 (NVGQTPNNNNNNNHGVSETENDLL), and 276–326 (YEYG…PKIK). 3 stretches are compositionally biased toward low complexity: residues 21-42 (SLKSSPSSTSSLSSISTSSSSS), 53-78 (NRNTSNSQNSSISTAPTTATAANTTP), and 117-137 (EQQLQDGEPLSAPTTNNGTTK).

Functionally, virulence factor involved in pathogen-host interaction. Modulates host pro-inflammatory cytokine interleukin-1 beta (IL1B) expression. This is Virulence factor CaO19.6688 from Candida albicans (strain SC5314 / ATCC MYA-2876) (Yeast).